The following is a 624-amino-acid chain: Altered inheritance of mitochondria protein 9, mitochondrial (624 aa).

The transit peptide at 1–34 (MLSRVARCSRTLNQVTRNGQSGLFSAVLRTSIRQ) directs the protein to the mitochondrion.

Belongs to the AIM9 family.

The protein localises to the mitochondrion. The protein is Altered inheritance of mitochondria protein 9, mitochondrial (AIM9) of Candida albicans (strain WO-1) (Yeast).